Consider the following 286-residue polypeptide: ATP synthase gamma chain (286 aa).

Belongs to the ATPase gamma chain family. As to quaternary structure, F-type ATPases have 2 components, CF(1) - the catalytic core - and CF(0) - the membrane proton channel. CF(1) has five subunits: alpha(3), beta(3), gamma(1), delta(1), epsilon(1). CF(0) has three main subunits: a, b and c.

It localises to the cell inner membrane. Functionally, produces ATP from ADP in the presence of a proton gradient across the membrane. The gamma chain is believed to be important in regulating ATPase activity and the flow of protons through the CF(0) complex. The chain is ATP synthase gamma chain from Pseudomonas putida (strain GB-1).